A 380-amino-acid chain; its full sequence is Beta sliding clamp (380 aa).

It belongs to the beta sliding clamp family. In terms of assembly, forms a ring-shaped head-to-tail homodimer around DNA which binds and tethers DNA polymerases and other proteins to the DNA. The DNA replisome complex has a single clamp-loading complex (3 tau and 1 each of delta, delta', psi and chi subunits) which binds 3 Pol III cores (1 core on the leading strand and 2 on the lagging strand) each with a beta sliding clamp dimer. Additional proteins in the replisome are other copies of gamma, psi and chi, Ssb, DNA helicase and RNA primase.

The protein localises to the cytoplasm. Its function is as follows. Confers DNA tethering and processivity to DNA polymerases and other proteins. Acts as a clamp, forming a ring around DNA (a reaction catalyzed by the clamp-loading complex) which diffuses in an ATP-independent manner freely and bidirectionally along dsDNA. Initially characterized for its ability to contact the catalytic subunit of DNA polymerase III (Pol III), a complex, multichain enzyme responsible for most of the replicative synthesis in bacteria; Pol III exhibits 3'-5' exonuclease proofreading activity. The beta chain is required for initiation of replication as well as for processivity of DNA replication. This Lactococcus lactis subsp. lactis (strain IL1403) (Streptococcus lactis) protein is Beta sliding clamp (dnaN).